A 107-amino-acid polypeptide reads, in one-letter code: Phosphoribosyl-ATP pyrophosphatase (107 aa).

It belongs to the PRA-PH family.

Its subcellular location is the cytoplasm. It carries out the reaction 1-(5-phospho-beta-D-ribosyl)-ATP + H2O = 1-(5-phospho-beta-D-ribosyl)-5'-AMP + diphosphate + H(+). Its pathway is amino-acid biosynthesis; L-histidine biosynthesis; L-histidine from 5-phospho-alpha-D-ribose 1-diphosphate: step 2/9. The chain is Phosphoribosyl-ATP pyrophosphatase from Bacillus mycoides (strain KBAB4) (Bacillus weihenstephanensis).